The primary structure comprises 313 residues: Putative adhesin P1-like protein MPN_202 (313 aa).

The span at 1–16 (MGSQNQGSTTTTSAGN) shows a compositional bias: low complexity. The segment at 1–44 (MGSQNQGSTTTTSAGNPDSLVTDKVDQKGQVQTSGQNLSDTNYT) is disordered. Over residues 29–44 (GQVQTSGQNLSDTNYT) the composition is skewed to polar residues.

Belongs to the adhesin P1 family.

The chain is Putative adhesin P1-like protein MPN_202 from Mycoplasma pneumoniae (strain ATCC 29342 / M129 / Subtype 1) (Mycoplasmoides pneumoniae).